The sequence spans 47 residues: Large ribosomal subunit protein bL33 (47 aa).

Belongs to the bacterial ribosomal protein bL33 family.

The sequence is that of Large ribosomal subunit protein bL33 from Staphylococcus capitis.